The chain runs to 318 residues: tRNA methyltransferase 10 homolog B (318 aa).

Basic and acidic residues predominate over residues 1-10 (MDCKSEESAQ). The disordered stretch occupies residues 1-105 (MDCKSEESAQ…DPGNGTCPQH (105 aa)). The segment covering 52-63 (SPANSAVWSSKN) has biased composition (polar residues). Residues 64 to 83 (MQRKQRHWERIVSSKKSKRK) show a composition bias toward basic residues. Residues 72 to 93 (ERIVSSKKSKRKQERERRKAKR) adopt a coiled-coil conformation. The segment covering 84–96 (QERERRKAKRAED) has biased composition (basic and acidic residues). The region spanning 114-311 (TKEKLLEAKH…KGVSPGKGYV (198 aa)) is the SAM-dependent MTase TRM10-type domain.

It belongs to the class IV-like SAM-binding methyltransferase superfamily. TRM10 family.

The catalysed reaction is guanosine(9) in tRNA + S-adenosyl-L-methionine = N(1)-methylguanosine(9) in tRNA + S-adenosyl-L-homocysteine + H(+). In terms of biological role, S-adenosyl-L-methionine-dependent guanine N(1)-methyltransferase that catalyzes the formation of N(1)-methylguanine at position 9 (m1G9) in tRNAs. Probably not able to catalyze formation of N(1)-methyladenine at position 9 (m1A9) in tRNAs. The protein is tRNA methyltransferase 10 homolog B (Trmt10b) of Mus musculus (Mouse).